Consider the following 115-residue polypeptide: Large ribosomal subunit protein bL19 (115 aa).

The protein belongs to the bacterial ribosomal protein bL19 family.

Its function is as follows. This protein is located at the 30S-50S ribosomal subunit interface and may play a role in the structure and function of the aminoacyl-tRNA binding site. The protein is Large ribosomal subunit protein bL19 of Shouchella clausii (strain KSM-K16) (Alkalihalobacillus clausii).